The sequence spans 139 residues: MSIISEFREFIARGNVIDLAVGVIIGAAFNDIVKALVDNIVMPPIGLVLSGIDFSDLAWVLKPDDPATPALDAVAIQYGAFINTCIRFLIVAWAVFMLVKLVNVIRRREAEKPPEEKPAPTPQETLLMEIRDLLKRRAD.

Helical transmembrane passes span 16–36 (VIDL…VKAL), 40–60 (IVMP…LAWV), and 79–99 (GAFI…FMLV).

This sequence belongs to the MscL family. In terms of assembly, homopentamer.

The protein resides in the cell inner membrane. Its function is as follows. Channel that opens in response to stretch forces in the membrane lipid bilayer. May participate in the regulation of osmotic pressure changes within the cell. This Phenylobacterium zucineum (strain HLK1) protein is Large-conductance mechanosensitive channel.